An 89-amino-acid polypeptide reads, in one-letter code: Small ribosomal subunit protein bS16 (89 aa).

Belongs to the bacterial ribosomal protein bS16 family.

This Anaplasma marginale (strain Florida) protein is Small ribosomal subunit protein bS16.